The primary structure comprises 443 residues: Sensor histidine protein kinase HK06 (443 aa).

Helical transmembrane passes span Phe-16 to Phe-36 and Ile-140 to Ser-160. Residues Lys-165–His-217 enclose the HAMP domain. The Histidine kinase domain occupies Gly-239–Leu-443. His-242 carries the phosphohistidine; by autocatalysis modification.

It is found in the cell membrane. It catalyses the reaction ATP + protein L-histidine = ADP + protein N-phospho-L-histidine.. Its function is as follows. Member of the two-component regulatory system HK06/RR06 involved in regulation of target genes, including choline-binding protein CbpA. Has been shown in one study to not be required for regulation of expression of choline-binding protein CbpA. This is Sensor histidine protein kinase HK06 from Streptococcus pneumoniae serotype 2 (strain D39 / NCTC 7466).